The primary structure comprises 540 residues: Intestinal-type alkaline phosphatase 1 (540 aa).

The N-terminal stretch at 1–20 (MQGDWVLLLLLGLRIHLSFG) is a signal peptide. A Mg(2+)-binding site is contributed by Asp-62. Positions 62 and 112 each coordinate Zn(2+). Ser-112 serves as the catalytic Phosphoserine intermediate. Cys-141 and Cys-203 are disulfide-bonded. The N-linked (GlcNAc...) asparagine glycan is linked to Asn-142. Position 175 (Ser-175) interacts with Mg(2+). Positions 236, 289, and 290 each coordinate Ca(2+). A glycan (N-linked (GlcNAc...) asparagine) is linked at Asn-301. Asp-305 contributes to the Ca(2+) binding site. Glu-331 lines the Mg(2+) pocket. The Zn(2+) site is built by Asp-336, His-340, Asp-377, and His-378. A glycan (N-linked (GlcNAc...) asparagine) is linked at Asn-428. His-452 serves as a coordination point for Zn(2+). A disulfide bridge links Cys-487 with Cys-494. Asn-511 carries the GPI-anchor amidated asparagine lipid modification. Residues 512–540 (SAITMNNVLLSLQLLVSMLLLVGTALVVS) constitute a propeptide, removed in mature form.

The protein belongs to the alkaline phosphatase family. As to quaternary structure, homodimer. Mg(2+) is required as a cofactor. Zn(2+) serves as cofactor. It depends on Ca(2+) as a cofactor.

It is found in the cell membrane. The catalysed reaction is a phosphate monoester + H2O = an alcohol + phosphate. In terms of biological role, alkaline phosphatase that can hydrolyze various phosphate compounds. In Rattus norvegicus (Rat), this protein is Intestinal-type alkaline phosphatase 1 (Alpi).